Here is a 432-residue protein sequence, read N- to C-terminus: 3-phosphoshikimate 1-carboxyvinyltransferase (432 aa).

3 residues coordinate 3-phosphoshikimate: K22, S23, and R27. Position 22 (K22) interacts with phosphoenolpyruvate. 2 residues coordinate phosphoenolpyruvate: G96 and R127. 7 residues coordinate 3-phosphoshikimate: S173, S174, Q175, S201, D316, N339, and K343. Phosphoenolpyruvate is bound at residue Q175. D316 (proton acceptor) is an active-site residue. Phosphoenolpyruvate-binding residues include R347, R391, and K416.

It belongs to the EPSP synthase family. Monomer.

Its subcellular location is the cytoplasm. It carries out the reaction 3-phosphoshikimate + phosphoenolpyruvate = 5-O-(1-carboxyvinyl)-3-phosphoshikimate + phosphate. Its pathway is metabolic intermediate biosynthesis; chorismate biosynthesis; chorismate from D-erythrose 4-phosphate and phosphoenolpyruvate: step 6/7. In terms of biological role, catalyzes the transfer of the enolpyruvyl moiety of phosphoenolpyruvate (PEP) to the 5-hydroxyl of shikimate-3-phosphate (S3P) to produce enolpyruvyl shikimate-3-phosphate and inorganic phosphate. The sequence is that of 3-phosphoshikimate 1-carboxyvinyltransferase from Histophilus somni (Haemophilus somnus).